A 322-amino-acid polypeptide reads, in one-letter code: HPr kinase/phosphorylase (322 aa).

Residues H146 and K167 contribute to the active site. ATP is bound at residue 161–168 (GDSGLGKS). S168 is a binding site for Mg(2+). Catalysis depends on D185, which acts as the Proton acceptor; for phosphorylation activity. Proton donor; for dephosphorylation activity. An important for the catalytic mechanism of both phosphorylation and dephosphorylation region spans residues 209-218 (LEVRGLGLLD). E210 is a binding site for Mg(2+). R250 is an active-site residue. Residues 271 to 276 (QVAAGR) are important for the catalytic mechanism of dephosphorylation.

The protein belongs to the HPrK/P family. Homohexamer. The cofactor is Mg(2+).

The enzyme catalyses [HPr protein]-L-serine + ATP = [HPr protein]-O-phospho-L-serine + ADP + H(+). It catalyses the reaction [HPr protein]-O-phospho-L-serine + phosphate + H(+) = [HPr protein]-L-serine + diphosphate. In terms of biological role, catalyzes the ATP- as well as the pyrophosphate-dependent phosphorylation of a specific serine residue in HPr, a phosphocarrier protein of the phosphoenolpyruvate-dependent sugar phosphotransferase system (PTS). HprK/P also catalyzes the pyrophosphate-producing, inorganic phosphate-dependent dephosphorylation (phosphorolysis) of seryl-phosphorylated HPr (P-Ser-HPr). This Paraburkholderia phytofirmans (strain DSM 17436 / LMG 22146 / PsJN) (Burkholderia phytofirmans) protein is HPr kinase/phosphorylase.